We begin with the raw amino-acid sequence, 411 residues long: MMMMSLNSKQAFSMPHAGSLHVEPKYSALHSASPGSSAPAAPSASSPSSSSNAGGGGGGGGGGGGGGRSSSSSSSGSGGSGGGGGSEAMRRACLPTPPSNIFGGLDESLLARAEALAAVDIVSQSKSHHHHPPHHSPFKPDATYHTMNTIPCTSAASSSSVPISHPSALAGTHHHHHHHHHHHHQPHQALEGELLEHLSPGLALGAMAGPDGTVVSTPAHAPHMATMNPMHQAALSMAHAHGLPSHMGCMSDVDADPRDLEAFAERFKQRRIKLGVTQADVGSALANLKIPGVGSLSQSTICRFESLTLSHNNMIALKPILQAWLEEAEKSHREKLTKPELFNGAEKKRKRTSIAAPEKRSLEAYFAIQPRPSSEKIAAIAEKLDLKKNVVRVWFCNQRQKQKRMKYSAGI.

Residues 29–95 are disordered; the sequence is LHSASPGSSA…SEAMRRACLP (67 aa). The span at 31 to 52 shows a compositional bias: low complexity; that stretch reads SASPGSSAPAAPSASSPSSSSN. Composition is skewed to gly residues over residues 53–68 and 76–86; these read AGGGGGGGGGGGGGGR and GSGGSGGGGGS. The segment at 93 to 239 is required for transcriptional activation; the sequence is CLPTPPSNIF…MHQAALSMAH (147 aa). Positions 112–121 match the POU-IV box motif; the sequence is RAEALAAVDI. Over residues 154 to 168 the composition is skewed to low complexity; the sequence is SAASSSSVPISHPSA. The interval 154–190 is disordered; the sequence is SAASSSSVPISHPSALAGTHHHHHHHHHHHHQPHQAL. Positions 172-186 are enriched in basic residues; that stretch reads THHHHHHHHHHHHQP. The Nuclear speckle targeting signal motif lies at 173 to 187; the sequence is HHHHHHHHHHHHQPH. The interval 240–411 is required for DNA-binding and transcriptional repression; it reads AHGLPSHMGC…QKRMKYSAGI (172 aa). Residues 252 to 329 form the POU-specific domain; it reads DVDADPRDLE…ILQAWLEEAE (78 aa). A DNA-binding region (homeobox) is located at residues 347–406; it reads KKRKRTSIAAPEKRSLEAYFAIQPRPSSEKIAAIAEKLDLKKNVVRVWFCNQRQKQKRMK.

It belongs to the POU transcription factor family. Class-4 subfamily. As to quaternary structure, isoform 2: Interacts with POU4F1 isoform 1; this interaction inhibits both POU4F1 DNA-binding and transcriptional activities. Isoform 2: Interacts (C-terminus) with ESR1 (via DNA-binding domain); this interaction increases the estrogen receptor ESR1 transcriptional activity in a DNA- and ligand 17-beta-estradiol-independent manner. Isoform 2: Interacts (via C-terminus) with TP53 (via N-terminus). Interacts with DLX1 (via homeobox DNA-binding domain); this interaction suppresses DLX1-mediated transcriptional activity in postnatal retina enhancing retinal ganglion cell (RGC) differentiation. Interacts with DLX2 (via homeobox DNA-binding domain); this interaction enhances RGC differentiation. Isoform 1: Interacts (via C-terminus) with ISL1 (via C-terminus). Isoform 1: Interacts with ISL2. Isoform 1: Interacts with LHX2. Expressed in retinal ganglion cells (RGCs). Expressed in mature osteoclasts. Expressed in cells of layers of the superior colliculus and the adjacent periaqueductal gray (at protein level). Expressed in the brain, peripheral sensory nervous system and retina. Expressed in the optical, intermediate, and deep gray areas of the superior colliculus, the dorsal column of the mesencephalic and pontine central gray, and the lateral interpeduncular nucleus of the brain. Expressed predominantly in postmitotic, terminally differentiated neurons. Expressed in ganglion cell layer (GCL) of the retina.

It localises to the nucleus. The protein resides in the nucleus speckle. The protein localises to the cytoplasm. In terms of biological role, tissue-specific DNA-binding transcription factor involved in the development and differentiation of target cells. Functions either as activator or repressor by modulating the rate of target gene transcription through RNA polymerase II enzyme in a promoter-dependent manner. Binds to the consensus octamer motif 5'-AT[A/T]A[T/A]T[A/T]A-3' of promoter of target genes. Plays a fundamental role in the gene regulatory network essential for retinal ganglion cell (RGC) differentiation. Binds to an octamer site to form a ternary complex with ISL1; cooperates positively with ISL1 and ISL2 to potentiate transcriptional activation of RGC target genes being involved in RGC fate commitment in the developing retina and RGC axon formation and pathfinding. Inhibits DLX1 and DLX2 transcriptional activities preventing DLX1- and DLX2-mediated ability to promote amacrine cell fate specification. In cooperation with TP53 potentiates transcriptional activation of BAX promoter activity increasing neuronal cell apoptosis. Negatively regulates BAX promoter activity in the absence of TP53. Acts as a transcriptional coactivator via its interaction with the transcription factor ESR1 by enhancing its effect on estrogen response element (ERE)-containing promoter. Antagonizes the transcriptional stimulatory activity of POU4F1 by preventing its binding to an octamer motif. Involved in TNFSF11-mediated terminal osteoclast differentiation. In Mus musculus (Mouse), this protein is POU domain, class 4, transcription factor 2.